A 151-amino-acid chain; its full sequence is Coiled-coil-helix-coiled-coil-helix domain-containing protein 2 (151 aa).

2 disordered regions span residues M1–P50 and G77–Q111. A compositionally biased stretch (low complexity) spans S10 to P26. Residues R27–A38 are compositionally biased toward pro residues. Low complexity-rich tracts occupy residues P39–P50 and Q100–Q111. One can recognise a CHCH domain in the interval Q111–A151. 2 short sequence motifs (cx9C motif) span residues C114 to C124 and C134 to C144. Cystine bridges form between C114–C144 and C124–C134.

In terms of assembly, interacts with RBPJ.

Its subcellular location is the nucleus. It localises to the mitochondrion. It is found in the mitochondrion intermembrane space. Its function is as follows. Transcription factor. Binds to the oxygen responsive element of COX4I2 and activates its transcription under hypoxia conditions (4% oxygen), as well as normoxia conditions (20% oxygen). This Homo sapiens (Human) protein is Coiled-coil-helix-coiled-coil-helix domain-containing protein 2 (CHCHD2).